Here is a 363-residue protein sequence, read N- to C-terminus: 3-isopropylmalate dehydrogenase (363 aa).

78-91 (GPKWEHLPPAEQPE) is an NAD(+) binding site. The substrate site is built by Arg99, Arg109, Arg138, and Asp227. Mg(2+) is bound by residues Asp227, Asp251, and Asp255. 285–297 (GSAPDIAGKGIAN) is an NAD(+) binding site.

The protein belongs to the isocitrate and isopropylmalate dehydrogenases family. LeuB type 1 subfamily. As to quaternary structure, homodimer. Mg(2+) serves as cofactor. It depends on Mn(2+) as a cofactor.

The protein resides in the cytoplasm. The catalysed reaction is (2R,3S)-3-isopropylmalate + NAD(+) = 4-methyl-2-oxopentanoate + CO2 + NADH. The protein operates within amino-acid biosynthesis; L-leucine biosynthesis; L-leucine from 3-methyl-2-oxobutanoate: step 3/4. Catalyzes the oxidation of 3-carboxy-2-hydroxy-4-methylpentanoate (3-isopropylmalate) to 3-carboxy-4-methyl-2-oxopentanoate. The product decarboxylates to 4-methyl-2 oxopentanoate. This is 3-isopropylmalate dehydrogenase from Photorhabdus laumondii subsp. laumondii (strain DSM 15139 / CIP 105565 / TT01) (Photorhabdus luminescens subsp. laumondii).